The primary structure comprises 354 residues: Peptide chain release factor 1 (354 aa).

N5-methylglutamine is present on Gln-230.

The protein belongs to the prokaryotic/mitochondrial release factor family. Post-translationally, methylated by PrmC. Methylation increases the termination efficiency of RF1.

Its subcellular location is the cytoplasm. Peptide chain release factor 1 directs the termination of translation in response to the peptide chain termination codons UAG and UAA. This is Peptide chain release factor 1 from Rhodospirillum rubrum (strain ATCC 11170 / ATH 1.1.1 / DSM 467 / LMG 4362 / NCIMB 8255 / S1).